The sequence spans 122 residues: Ubiquitin-related modifier 1 (122 aa).

Over residues 33–48 (PSTVPADNNTSVTTKD) the composition is skewed to polar residues. Residues 33–52 (PSTVPADNNTSVTTKDAASP) form a disordered region. Gly-122 bears the 1-thioglycine mark. Residue Gly-122 forms a Glycyl lysine isopeptide (Gly-Lys) (interchain with K-? in acceptor proteins) linkage.

This sequence belongs to the URM1 family. Post-translationally, C-terminal thiocarboxylation occurs in 2 steps, it is first acyl-adenylated (-COAMP) via the hesA/moeB/thiF part of UBA4, then thiocarboxylated (-COSH) via the rhodanese domain of UBA4.

The protein localises to the cytoplasm. It participates in tRNA modification; 5-methoxycarbonylmethyl-2-thiouridine-tRNA biosynthesis. Functionally, acts as a sulfur carrier required for 2-thiolation of mcm(5)S(2)U at tRNA wobble positions of cytosolic tRNA(Lys), tRNA(Glu) and tRNA(Gln). Serves as sulfur donor in tRNA 2-thiolation reaction by being thiocarboxylated (-COSH) at its C-terminus by the MOCS3 homolog UBA4. The sulfur is then transferred to tRNA to form 2-thiolation of mcm(5)S(2)U. Prior mcm(5) tRNA modification by the elongator complex is required for 2-thiolation. Also acts as a ubiquitin-like protein (UBL) that is covalently conjugated via an isopeptide bond to lysine residues of target proteins such as AHP1. The thiocarboxylated form serves as substrate for conjugation and oxidative stress specifically induces the formation of UBL-protein conjugates. This Laccaria bicolor (strain S238N-H82 / ATCC MYA-4686) (Bicoloured deceiver) protein is Ubiquitin-related modifier 1.